A 398-amino-acid chain; its full sequence is Bifunctional enzyme IspD/IspF (398 aa).

The tract at residues 1–234 is 2-C-methyl-D-erythritol 4-phosphate cytidylyltransferase; it reads MPNPPRTAAI…SRLTALLGDI (234 aa). Residues 235–398 form a 2-C-methyl-D-erythritol 2,4-cyclodiphosphate synthase region; that stretch reads RTGTGYDVHA…LPWGAEGLAG (164 aa). Residues Asp-241 and His-243 each contribute to the a divalent metal cation site. 4-CDP-2-C-methyl-D-erythritol 2-phosphate-binding positions include 241–243 and 267–268; these read DVH and HS. His-275 provides a ligand contact to a divalent metal cation. 4-CDP-2-C-methyl-D-erythritol 2-phosphate is bound by residues 289–291, 365–368, Phe-372, and Arg-375; these read DIG and TTSE.

In the N-terminal section; belongs to the IspD/TarI cytidylyltransferase family. IspD subfamily. It in the C-terminal section; belongs to the IspF family. A divalent metal cation is required as a cofactor.

The enzyme catalyses 2-C-methyl-D-erythritol 4-phosphate + CTP + H(+) = 4-CDP-2-C-methyl-D-erythritol + diphosphate. It carries out the reaction 4-CDP-2-C-methyl-D-erythritol 2-phosphate = 2-C-methyl-D-erythritol 2,4-cyclic diphosphate + CMP. It participates in isoprenoid biosynthesis; isopentenyl diphosphate biosynthesis via DXP pathway; isopentenyl diphosphate from 1-deoxy-D-xylulose 5-phosphate: step 2/6. The protein operates within isoprenoid biosynthesis; isopentenyl diphosphate biosynthesis via DXP pathway; isopentenyl diphosphate from 1-deoxy-D-xylulose 5-phosphate: step 4/6. In terms of biological role, bifunctional enzyme that catalyzes the formation of 4-diphosphocytidyl-2-C-methyl-D-erythritol from CTP and 2-C-methyl-D-erythritol 4-phosphate (MEP) (IspD), and catalyzes the conversion of 4-diphosphocytidyl-2-C-methyl-D-erythritol 2-phosphate (CDP-ME2P) to 2-C-methyl-D-erythritol 2,4-cyclodiphosphate (ME-CPP) with a corresponding release of cytidine 5-monophosphate (CMP) (IspF). The chain is Bifunctional enzyme IspD/IspF from Rhodopseudomonas palustris (strain BisB5).